Consider the following 625-residue polypeptide: Alpha-protein kinase vwkA (625 aa).

The span at 1-15 (MESKYVLSTEKESKT) shows a compositional bias: basic and acidic residues. The tract at residues 1-64 (MESKYVLSTE…GLSSGGSKTH (64 aa)) is disordered. 2 stretches are compositionally biased toward polar residues: residues 25–39 (DMDSISNSLSKTSLG) and 46–63 (SLKTDASRSGLSSGGSKT). A coiled-coil region spans residues 87–114 (TKDSITLAKEKEKKIEKRNEEIKLTFKA). Positions 122–322 (DLLFIVDCTG…KMNERIFISI (201 aa)) constitute a VWFA domain. In terms of domain architecture, Alpha-type protein kinase spans 386–600 (TCLSSSYEMK…HCKKLGLTIP (215 aa)). 570 to 576 (GSCNLGK) lines the ATP pocket. Residues 602 to 625 (FTSSSSTSSSSRSTSSSSSISYSY) form a disordered region.

This sequence belongs to the protein kinase superfamily. Alpha-type protein kinase family. ALPK subfamily. In terms of assembly, interacts with calmodulin; in the presence of calcium. Post-translationally, autophosphorylated, in vitro.

The protein resides in the cytoplasm. Its subcellular location is the cytosol. The protein localises to the perinuclear region. It is found in the contractile vacuole membrane. It carries out the reaction L-seryl-[protein] + ATP = O-phospho-L-seryl-[protein] + ADP + H(+). The enzyme catalyses L-threonyl-[protein] + ATP = O-phospho-L-threonyl-[protein] + ADP + H(+). With respect to regulation, autophosphorylation activity enhanced by calcium/calmodulin. Displays a modest preference for threonine over serine residues. Does not phosphorylate myosin II, however can phosphorylate MBP, in vitro. May be involved in the regulation of myosin II function during cytokinesis. Overexpression leads to impaired cell proliferation in suspension culture and fails to develop beyond the mound stage. Both overexpression and absence of the gene can result in defects in cytokinesis and alterations in myosin II abundance and assembly. This is Alpha-protein kinase vwkA (vwkA) from Dictyostelium discoideum (Social amoeba).